Reading from the N-terminus, the 139-residue chain is Large ribosomal subunit protein uL16 (139 aa).

This sequence belongs to the universal ribosomal protein uL16 family. In terms of assembly, part of the 50S ribosomal subunit.

Binds 23S rRNA and is also seen to make contacts with the A and possibly P site tRNAs. The sequence is that of Large ribosomal subunit protein uL16 from Rippkaea orientalis (strain PCC 8801 / RF-1) (Cyanothece sp. (strain PCC 8801)).